The primary structure comprises 637 residues: DNA mismatch repair protein MutL (637 aa).

2 disordered regions span residues 352-384 and 405-430; these read DDFTSAKPSEDRGSTSSNEENEQRSSIDKNVLF and ASVEPALEKEPPAAELTAGAKGAMEQ.

The protein belongs to the DNA mismatch repair MutL/HexB family.

Its function is as follows. This protein is involved in the repair of mismatches in DNA. It is required for dam-dependent methyl-directed DNA mismatch repair. May act as a 'molecular matchmaker', a protein that promotes the formation of a stable complex between two or more DNA-binding proteins in an ATP-dependent manner without itself being part of a final effector complex. The sequence is that of DNA mismatch repair protein MutL from Halalkalibacterium halodurans (strain ATCC BAA-125 / DSM 18197 / FERM 7344 / JCM 9153 / C-125) (Bacillus halodurans).